Reading from the N-terminus, the 90-residue chain is Small ribosomal subunit protein bS16 (90 aa).

This sequence belongs to the bacterial ribosomal protein bS16 family.

This is Small ribosomal subunit protein bS16 from Streptococcus pneumoniae serotype 19F (strain G54).